A 276-amino-acid polypeptide reads, in one-letter code: Large ribosomal subunit protein uL2 (276 aa).

The disordered stretch occupies residues 224–265; the sequence is GTAMNPIDHPHGGGEGKNFGKHPVSPWGVQTKGKRTRSNKRT.

It belongs to the universal ribosomal protein uL2 family. Part of the 50S ribosomal subunit. Forms a bridge to the 30S subunit in the 70S ribosome.

In terms of biological role, one of the primary rRNA binding proteins. Required for association of the 30S and 50S subunits to form the 70S ribosome, for tRNA binding and peptide bond formation. It has been suggested to have peptidyltransferase activity; this is somewhat controversial. Makes several contacts with the 16S rRNA in the 70S ribosome. In Blochmanniella floridana, this protein is Large ribosomal subunit protein uL2.